A 258-amino-acid chain; its full sequence is Pyridoxine 5'-phosphate synthase (258 aa).

Asn16 contacts 3-amino-2-oxopropyl phosphate. Position 18–19 (18–19 (DH)) interacts with 1-deoxy-D-xylulose 5-phosphate. Arg27 serves as a coordination point for 3-amino-2-oxopropyl phosphate. Catalysis depends on His52, which acts as the Proton acceptor. The 1-deoxy-D-xylulose 5-phosphate site is built by Arg54 and His59. Glu79 functions as the Proton acceptor in the catalytic mechanism. Thr109 is a binding site for 1-deoxy-D-xylulose 5-phosphate. The active-site Proton donor is His200. 3-amino-2-oxopropyl phosphate contacts are provided by residues Gly201 and 222 to 223 (GH).

The protein belongs to the PNP synthase family. In terms of assembly, homooctamer; tetramer of dimers.

It is found in the cytoplasm. The catalysed reaction is 3-amino-2-oxopropyl phosphate + 1-deoxy-D-xylulose 5-phosphate = pyridoxine 5'-phosphate + phosphate + 2 H2O + H(+). It functions in the pathway cofactor biosynthesis; pyridoxine 5'-phosphate biosynthesis; pyridoxine 5'-phosphate from D-erythrose 4-phosphate: step 5/5. Its function is as follows. Catalyzes the complicated ring closure reaction between the two acyclic compounds 1-deoxy-D-xylulose-5-phosphate (DXP) and 3-amino-2-oxopropyl phosphate (1-amino-acetone-3-phosphate or AAP) to form pyridoxine 5'-phosphate (PNP) and inorganic phosphate. The polypeptide is Pyridoxine 5'-phosphate synthase (Burkholderia lata (strain ATCC 17760 / DSM 23089 / LMG 22485 / NCIMB 9086 / R18194 / 383)).